A 428-amino-acid polypeptide reads, in one-letter code: Enolase (428 aa).

Gln162 lines the (2R)-2-phosphoglycerate pocket. The active-site Proton donor is Glu204. Mg(2+) is bound by residues Asp241, Glu286, and Asp313. Lys338, Arg367, Ser368, and Lys389 together coordinate (2R)-2-phosphoglycerate. Lys338 serves as the catalytic Proton acceptor.

The protein belongs to the enolase family. In terms of assembly, component of the RNA degradosome, a multiprotein complex involved in RNA processing and mRNA degradation. Requires Mg(2+) as cofactor.

The protein localises to the cytoplasm. Its subcellular location is the secreted. It is found in the cell surface. It carries out the reaction (2R)-2-phosphoglycerate = phosphoenolpyruvate + H2O. Its pathway is carbohydrate degradation; glycolysis; pyruvate from D-glyceraldehyde 3-phosphate: step 4/5. In terms of biological role, catalyzes the reversible conversion of 2-phosphoglycerate (2-PG) into phosphoenolpyruvate (PEP). It is essential for the degradation of carbohydrates via glycolysis. The sequence is that of Enolase from Vesicomyosocius okutanii subsp. Calyptogena okutanii (strain HA).